The primary structure comprises 162 residues: Peptide deformylase (162 aa).

2 residues coordinate Fe cation: cysteine 91 and histidine 133. The active site involves glutamate 134. Histidine 137 is a Fe cation binding site.

The protein belongs to the polypeptide deformylase family. Fe(2+) serves as cofactor.

The enzyme catalyses N-terminal N-formyl-L-methionyl-[peptide] + H2O = N-terminal L-methionyl-[peptide] + formate. Its function is as follows. Removes the formyl group from the N-terminal Met of newly synthesized proteins. Requires at least a dipeptide for an efficient rate of reaction. N-terminal L-methionine is a prerequisite for activity but the enzyme has broad specificity at other positions. This chain is Peptide deformylase, found in Finegoldia magna (strain ATCC 29328 / DSM 20472 / WAL 2508) (Peptostreptococcus magnus).